Here is a 38-residue protein sequence, read N- to C-terminus: Glutathione S-transferase 2 (38 aa).

This sequence belongs to the GST superfamily. Phi family.

The enzyme catalyses RX + glutathione = an S-substituted glutathione + a halide anion + H(+). Functionally, conjugation of reduced glutathione to a wide number of exogenous and endogenous hydrophobic electrophiles. In plants, may have a detoxification role against certain herbicides. This is Glutathione S-transferase 2 from Populus euphratica (Euphrates poplar).